A 669-amino-acid chain; its full sequence is Galactocerebrosidase (669 aa).

Residues 1-26 form the signal peptide; the sequence is MTAAAGSAGHAAVPLLLCALLVPGGA. Substrate-binding residues include Thr-93, Trp-135, and Asn-181. Catalysis depends on Glu-182, which acts as the Proton donor/acceptor. The active-site Nucleophile is Glu-258. Cysteines 271 and 378 form a disulfide. The N-linked (GlcNAc...) asparagine glycan is linked to Asn-363. Arg-380 lines the substrate pocket. Asn-387, Asn-543, and Asn-586 each carry an N-linked (GlcNAc...) asparagine glycan.

Belongs to the glycosyl hydrolase 59 family.

The protein resides in the lysosome. The enzyme catalyses a beta-D-galactosyl-(1&lt;-&gt;1')-N-acylsphing-4-enine + H2O = an N-acylsphing-4-enine + D-galactose. The catalysed reaction is beta-D-galactosyl-(1&lt;-&gt;1)-sphing-4-enine + H2O = sphing-4-enine + D-galactose. It catalyses the reaction a D-galactosylceramide + H2O = an N-acyl-sphingoid base + D-galactose. Functionally, hydrolyzes the galactose ester bonds of glycolipids such as galactosylceramide and galactosylsphingosine. Enzyme with very low activity responsible for the lysosomal catabolism of galactosylceramide, a major lipid in myelin, kidney and epithelial cells of small intestine and colon. This is Galactocerebrosidase from Canis lupus familiaris (Dog).